Reading from the N-terminus, the 400-residue chain is Glycerol-3-phosphate dehydrogenase [NAD(+)] 1 (400 aa).

NAD(+)-binding positions include 50-55 (GSGNWG), Phe-138, Lys-161, and Ala-194. Position 161 (Lys-161) interacts with substrate. Lys-254 (proton acceptor) is an active-site residue. Residues Arg-319 and Gln-348 each coordinate NAD(+). 319-320 (RN) provides a ligand contact to substrate.

This sequence belongs to the NAD-dependent glycerol-3-phosphate dehydrogenase family.

The catalysed reaction is sn-glycerol 3-phosphate + NAD(+) = dihydroxyacetone phosphate + NADH + H(+). This is Glycerol-3-phosphate dehydrogenase [NAD(+)] 1 (GPD1) from Candida glabrata (strain ATCC 2001 / BCRC 20586 / JCM 3761 / NBRC 0622 / NRRL Y-65 / CBS 138) (Yeast).